A 102-amino-acid polypeptide reads, in one-letter code: Citrate lyase acyl carrier protein (102 aa).

Residue serine 14 is modified to O-(phosphoribosyl dephospho-coenzyme A)serine.

Belongs to the CitD family. As to quaternary structure, oligomer with a subunit composition of (alpha,beta,gamma)6.

The protein localises to the cytoplasm. Covalent carrier of the coenzyme of citrate lyase. This chain is Citrate lyase acyl carrier protein, found in Streptococcus mutans serotype c (strain ATCC 700610 / UA159).